A 264-amino-acid chain; its full sequence is 4-oxalocrotonate decarboxylase (264 aa).

It belongs to the hydratase/decarboxylase family.

The catalysed reaction is (3E)-2-oxohex-3-enedioate + H(+) = 2-oxopent-4-enoate + CO2. Its pathway is xenobiotic degradation; toluene degradation. The polypeptide is 4-oxalocrotonate decarboxylase (xylI) (Pseudomonas putida (Arthrobacter siderocapsulatus)).